Here is a 247-residue protein sequence, read N- to C-terminus: Small ribosomal subunit protein uS2 (247 aa).

It belongs to the universal ribosomal protein uS2 family.

This is Small ribosomal subunit protein uS2 from Ralstonia nicotianae (strain ATCC BAA-1114 / GMI1000) (Ralstonia solanacearum).